The following is a 259-amino-acid chain: FAD-linked sulfhydryl oxidase (259 aa).

Belongs to the baculoviridae p33 family. Homodimer.

Its subcellular location is the host cytoplasm. It is found in the host nucleus. The enzyme catalyses 2 R'C(R)SH + O2 = R'C(R)S-S(R)CR' + H2O2. Functionally, functional FAD-linked sulfhydryl oxidase that is required for infectious budded virion (BV) production and for the formation of enveloped occluded virion (ODV). This Lepidoptera (butterflies and moths) protein is FAD-linked sulfhydryl oxidase (P33).